We begin with the raw amino-acid sequence, 480 residues long: Glycogen synthase (480 aa).

Lys-15 is a binding site for ADP-alpha-D-glucose.

It belongs to the glycosyltransferase 1 family. Bacterial/plant glycogen synthase subfamily.

It catalyses the reaction [(1-&gt;4)-alpha-D-glucosyl](n) + ADP-alpha-D-glucose = [(1-&gt;4)-alpha-D-glucosyl](n+1) + ADP + H(+). It participates in glycan biosynthesis; glycogen biosynthesis. In terms of biological role, synthesizes alpha-1,4-glucan chains using ADP-glucose. This chain is Glycogen synthase, found in Rhizobium leguminosarum bv. trifolii (strain WSM2304).